The primary structure comprises 571 residues: Glutamine--tRNA ligase (571 aa).

The short motif at 35 to 45 is the 'HIGH' region element; the sequence is PEPNGYLHIGH. Residues 36–38 and 42–48 each bind ATP; these read EPN and HIGHAKS. Residues aspartate 68 and tyrosine 213 each coordinate L-glutamine. Residues threonine 232, 262–263, and 270–272 contribute to the ATP site; these read RL and LSK. Residues 269–273 carry the 'KMSKS' region motif; the sequence is ILSKR.

This sequence belongs to the class-I aminoacyl-tRNA synthetase family. In terms of assembly, monomer.

Its subcellular location is the cytoplasm. The enzyme catalyses tRNA(Gln) + L-glutamine + ATP = L-glutaminyl-tRNA(Gln) + AMP + diphosphate. In Buchnera aphidicola subsp. Acyrthosiphon pisum (strain Tuc7), this protein is Glutamine--tRNA ligase.